Here is a 352-residue protein sequence, read N- to C-terminus: Blue-sensitive opsin (352 aa).

Over 1–42 (MRGNRLVEFPDDFWIPIPLDTNNVTALSPFLVPQDHLGSPTI) the chain is Extracellular. N-linked (GlcNAc...) asparagine glycosylation is present at asparagine 23. Residues 43–67 (FYSMSALMFVLFVAGTAINLLTIAC) form a helical membrane-spanning segment. Residues 68 to 79 (TLQYKKLRSHLN) are Cytoplasmic-facing. Residues 80-105 (YILVNMAVANLIVASTGSSTCFVCFA) form a helical membrane-spanning segment. Over 106–119 (FKYMVLGPLGCKIE) the chain is Extracellular. A disulfide bond links cysteine 116 and cysteine 193. Residues 120-139 (GFTAALGGMVSLWSLAVIAF) traverse the membrane as a helical segment. Over 140–158 (ERWLVICKPLGNFVFKSEH) the chain is Cytoplasmic. A helical transmembrane segment spans residues 159 to 182 (ALLCCALTWVCGLCASVPPLVGWS). At 183 to 208 (RYIPEGMQCSCGPDWYTTGNKFNNES) the chain is on the extracellular side. The N-linked (GlcNAc...) asparagine glycan is linked to asparagine 206. Residues 209–236 (FVMFLFCFCFAVPFSIIVFCYSQLLFTL) form a helical membrane-spanning segment. The Cytoplasmic segment spans residues 237–258 (KMAAKAQADSASTQKAEKEVTR). A helical transmembrane segment spans residues 259-282 (MVVVMVVAFLVCYVPYASFALWVI). Topologically, residues 283–290 (NNRGQTFD) are extracellular. Residues 291-315 (LRLATIPSCVSKASTVYNPVIYVLL) traverse the membrane as a helical segment. Lysine 302 carries the N6-(retinylidene)lysine modification. Topologically, residues 316–352 (NKQFRLCMKKMLGMSADEDEESSTSQSTTEVSKVGPS) are cytoplasmic. Residues 332–352 (DEDEESSTSQSTTEVSKVGPS) are disordered.

The protein belongs to the G-protein coupled receptor 1 family. Opsin subfamily. Post-translationally, phosphorylated on some or all of the serine and threonine residues present in the C-terminal region. In terms of tissue distribution, the color pigments are found in the cone photoreceptor cells.

It localises to the membrane. Its function is as follows. Visual pigments are the light-absorbing molecules that mediate vision. They consist of an apoprotein, opsin, covalently linked to cis-retinal. In Oryzias latipes (Japanese rice fish), this protein is Blue-sensitive opsin.